The chain runs to 215 residues: Casparian strip membrane protein 3 (215 aa).

Residues 1–26 are disordered; it reads MDSEKTGEAKITIQEPKAADPKGKGI. The Cytoplasmic segment spans residues 1-55; sequence MDSEKTGEAKITIQEPKAADPKGKGIADAPPPPVVVTTAKAIQKLPRGGWKKGVA. A helical membrane pass occupies residues 56 to 76; the sequence is IFDFVVRLCAIATGLAATGIM. The Extracellular portion of the chain corresponds to 77 to 101; the sequence is GTTEQTLPFFTQFFQFHAEYNDLPT. Residues 102–122 form a helical membrane-spanning segment; the sequence is FMFFVFANGIASGYLILSLPF. Residues 123–136 are Cytoplasmic-facing; sequence SIVCIVRPLAIVPR. Residues 137-157 form a helical membrane-spanning segment; that stretch reads LLLIIFDTVVMALTIAAASAA. At 158-189 the chain is on the extracellular side; that stretch reads AAIVYLAHNGNSNANWNAICQQFNDFCQQTST. Residues 190-210 traverse the membrane as a helical segment; sequence AVVASFITAAMLTFLIVLSAF. At 211-215 the chain is on the cytoplasmic side; it reads ALKRN.

This sequence belongs to the Casparian strip membrane proteins (CASP) family. Homodimer and heterodimers.

The protein localises to the cell membrane. Its function is as follows. Regulates membrane-cell wall junctions and localized cell wall deposition. Required for establishment of the Casparian strip membrane domain (CSD) and the subsequent formation of Casparian strips, a cell wall modification of the root endodermis that determines an apoplastic barrier between the intraorganismal apoplasm and the extraorganismal apoplasm and prevents lateral diffusion. This Ricinus communis (Castor bean) protein is Casparian strip membrane protein 3.